A 2731-amino-acid polypeptide reads, in one-letter code: Teneurin-m (2731 aa).

Disordered stretches follow at residues 1–60 (MNPY…QNQQ) and 103–136 (LLEG…NNPN). Topologically, residues 1-229 (MNPYEYESTL…RKDLVARCSS (229 aa)) are cytoplasmic. Positions 110-119 (TAPPDVPPRN) are enriched in pro residues. Residues 120 to 136 (PTMSRMQNGRLTVNNPN) are compositionally biased toward polar residues. A helical transmembrane segment spans residues 230-250 (PWFGIGSISVLFAFVVMLILL). Topologically, residues 251-2731 (TTTGVIKWNQ…RQLKFGELSA (2481 aa)) are extracellular. The disordered stretch occupies residues 321–387 (SSAATVTTAT…RTFPARSFPP (67 aa)). Positions 322–370 (SAATVTTATSNSGTAQGLQSTSASAEATSSAATSSSQSSLTPSLSSSLA) are enriched in low complexity. 4 consecutive EGF-like domains span residues 536 to 572 (GGDD…KECS), 574 to 606 (RHDE…KFCE), 643 to 676 (DALQ…DDCS), and 738 to 774 (TIEG…PDCG). 11 disulfides stabilise this stretch: Cys540–Cys549, Cys545–Cys560, Cys562–Cys571, Cys578–Cys589, Cys583–Cys594, Cys596–Cys605, Cys651–Cys664, Cys666–Cys675, Cys742–Cys752, Cys746–Cys762, and Cys764–Cys773. N-linked (GlcNAc...) asparagine glycosylation is present at Asn857. NHL repeat units follow at residues 1160–1201 (ECPD…IMTD), 1202–1246 (GSIR…VRDT), 1391–1434 (STAY…VRVI), and 1459–1502 (CFEA…VMSS). A YD repeat occupies 1618 to 1652 (TGLLRTKLDSTGRSYVYNYDEFGRLTSAVTPTGRV). The tract at residues 2691-2731 (LADDPGNVAFQRDAKRKRRKTGSSHRSASNRRQLKFGELSA) is disordered. The span at 2704–2724 (AKRKRRKTGSSHRSASNRRQL) shows a compositional bias: basic residues.

It belongs to the tenascin family. Teneurin subfamily. In terms of assembly, homodimer. Heterodimer with Ten-a. Interacts with Ten-a; the interaction occurs at the neuromuscular junction. Interacts with alpha-Spec and cher. In terms of processing, phosphorylated. Phosphorylation occurs at tyrosine residues. Proteolytically cleaved. As to expression, expressed in muscles and motor neurons (at protein level).

Its subcellular location is the cytoplasm. It localises to the postsynaptic cell membrane. The protein resides in the synapse. The protein localises to the synaptosome. It is found in the membrane. Functionally, involved in neural development, regulating the establishment of proper connectivity within the nervous system. Acts as a homophilic and heterophilic synaptic cell adhesion molecule that drives synapse assembly. Promotes bi-directional trans-synaptic signaling with Ten-a to organize neuromuscular synapses. Functions in olfactory synaptic partner matching by promoting homophilic cell adhesion between pre-synaptic olfactory receptor neurons (ORN) axons and post-synaptic projection neurons (PN) dendrites partner in the developing antennal lobe to form stable connections. Also required for peripheral axon growth cone guidance and target recognition of motor neurons. This is Teneurin-m (Ten-m) from Drosophila melanogaster (Fruit fly).